A 552-amino-acid chain; its full sequence is Hydroxylamine reductase (552 aa).

Positions 3, 6, 18, and 25 each coordinate [2Fe-2S] cluster. Hybrid [4Fe-2O-2S] cluster-binding residues include His-250, Glu-274, Cys-318, Cys-406, Cys-434, Cys-459, Glu-493, and Lys-495. Cys-406 carries the cysteine persulfide modification.

The protein belongs to the HCP family. [2Fe-2S] cluster is required as a cofactor. Hybrid [4Fe-2O-2S] cluster serves as cofactor.

The protein localises to the cytoplasm. It catalyses the reaction A + NH4(+) + H2O = hydroxylamine + AH2 + H(+). Catalyzes the reduction of hydroxylamine to form NH(3) and H(2)O. The polypeptide is Hydroxylamine reductase (Shewanella woodyi (strain ATCC 51908 / MS32)).